The primary structure comprises 463 residues: 6-phosphofructo-2-kinase/fructose-2,6-bisphosphatase 3 (463 aa).

The tract at residues 1–246 (MPLELTQSRV…VYYLMNIHWQ (246 aa)) is 6-phosphofructo-2-kinase. 42-50 (GLPARGKTY) provides a ligand contact to ATP. The beta-D-fructose 6-phosphate site is built by Arg-75 and Arg-99. Residue Asp-125 is part of the active site. Residues Thr-127 and Arg-133 each contribute to the beta-D-fructose 6-phosphate site. Cys-155 is a catalytic residue. An ATP-binding site is contributed by 164-169 (NIMEVK). The beta-D-fructose 6-phosphate site is built by Lys-169, Arg-191, and Tyr-195. Residues 247 to 463 (PRTIYLCRHG…PNPLMRSNSH (217 aa)) form a fructose-2,6-bisphosphatase region. Arg-254 serves as a coordination point for beta-D-fructose 2,6-bisphosphate. His-255 (tele-phosphohistidine intermediate) is an active-site residue. Beta-D-fructose 2,6-bisphosphate is bound by residues Asn-261 and Gly-267. Glu-324 serves as the catalytic Proton donor/acceptor. Tyr-335 is a binding site for beta-D-fructose 2,6-bisphosphate. ATP is bound at residue 346 to 349 (YALA). Residues Lys-353, Tyr-364, and Gln-390 each coordinate beta-D-fructose 2,6-bisphosphate. ATP-binding positions include 390–394 (QAVCV) and Tyr-426. Positions 444 to 463 (RERSEDAKKGPNPLMRSNSH) are disordered. Ser-462 is modified (phosphoserine; by AMPK and PKA).

In the C-terminal section; belongs to the phosphoglycerate mutase family. As to quaternary structure, homodimer. Forms a heterodimer with PFKFB2. Post-translationally, phosphorylation by AMPK stimulates activity. As to expression, brain.

The catalysed reaction is beta-D-fructose 2,6-bisphosphate + H2O = beta-D-fructose 6-phosphate + phosphate. It catalyses the reaction beta-D-fructose 6-phosphate + ATP = beta-D-fructose 2,6-bisphosphate + ADP + H(+). In terms of biological role, catalyzes both the synthesis and degradation of fructose 2,6-bisphosphate. The protein is 6-phosphofructo-2-kinase/fructose-2,6-bisphosphatase 3 (PFKFB3) of Bos taurus (Bovine).